A 177-amino-acid polypeptide reads, in one-letter code: SPbeta prophage-derived uncharacterized N-acetyltransferase YokL (177 aa).

An N-acetyltransferase domain is found at 11 to 170 (LTLRAIQPED…DGICFGMTRE (160 aa)).

It belongs to the acetyltransferase family.

This is SPbeta prophage-derived uncharacterized N-acetyltransferase YokL (yokL) from Bacillus subtilis (strain 168).